Here is a 148-residue protein sequence, read N- to C-terminus: Lysozyme-like protein 1 (148 aa).

The N-terminal stretch at 1–19 (MKSVGVFALIISFSIVAES) is a signal peptide. The C-type lysozyme domain maps to 20 to 148 (KIYTRCKLAK…SEWKRGCEVS (129 aa)). 4 cysteine pairs are disulfide-bonded: Cys-25-Cys-145, Cys-49-Cys-133, Cys-83-Cys-98, and Cys-94-Cys-112. Residue Glu-54 is part of the active site. Asn-58 carries an N-linked (GlcNAc...) asparagine glycan. Asp-71 is an active-site residue.

This sequence belongs to the glycosyl hydrolase 22 family. As to quaternary structure, monomer.

It localises to the secreted. It carries out the reaction Hydrolysis of (1-&gt;4)-beta-linkages between N-acetylmuramic acid and N-acetyl-D-glucosamine residues in a peptidoglycan and between N-acetyl-D-glucosamine residues in chitodextrins.. The polypeptide is Lysozyme-like protein 1 (Lyzl1) (Mus musculus (Mouse)).